A 92-amino-acid polypeptide reads, in one-letter code: N(2)-fixation sustaining protein CowN (92 aa).

It belongs to the CowN family.

Its function is as follows. Is required to sustain N(2)-dependent growth in the presence of low levels of carbon monoxide (CO). Probably acts by protecting the N(2) fixation ability of the nitrogenase complex, which is inactivated in the presence of CO. The polypeptide is N(2)-fixation sustaining protein CowN (Cereibacter sphaeroides (strain ATCC 17025 / ATH 2.4.3) (Rhodobacter sphaeroides)).